The primary structure comprises 285 residues: V-set and transmembrane domain-containing protein 2B (285 aa).

Positions 1–28 (MEQRNRLGALGYLLPLLLHSLLLFVADA) are cleaved as a signal peptide. One can recognise an Ig-like V-type domain in the interval 29–143 (TFTEVPKDVT…DDDTQEHKAQ (115 aa)). Residues 29–263 (TFTEVPKDVT…HGSGTGPGYS (235 aa)) lie on the Extracellular side of the membrane. Cysteines 49 and 127 form a disulfide. The disordered stretch occupies residues 160–225 (AEAVSHIQSS…AAAAAASATH (66 aa)). Composition is skewed to low complexity over residues 176–189 (ASSA…GAAV) and 208–225 (PAGS…SATH). The helical transmembrane segment at 264–284 (ADPLLSLLLLALHKFLHPLLG) threads the bilayer. Position 285 (His285) is a topological domain, cytoplasmic.

Its subcellular location is the membrane. The chain is V-set and transmembrane domain-containing protein 2B (Vstm2b) from Mus musculus (Mouse).